The sequence spans 345 residues: KRR1 small subunit processome component homolog (345 aa).

In terms of domain architecture, KH spans 125–193; sequence DIIKIGNLVH…VRDIVLETMN (69 aa). A compositionally biased stretch (basic residues) spans 232–245; that stretch reads NISKRKQPKVKKQK. Disordered regions lie at residues 232–260 and 273–329; these read NISK…ESKV and QEQK…VDVK. A coiled-coil region spans residues 270-298; sequence FLNQEQKQAKRNQERTEKQKEAAKRQDER. Composition is skewed to basic and acidic residues over residues 276 to 302 and 315 to 329; these read KQAK…RNKD and LKKE…VDVK.

This sequence belongs to the KRR1 family. As to quaternary structure, monomer. Component of the ribosomal small subunit (SSU) processome.

It is found in the nucleus. The protein localises to the nucleolus. Functionally, required for 40S ribosome biogenesis. Involved in nucleolar processing of pre-18S ribosomal RNA and ribosome assembly. Binds to RNA. Required for female germline development, cell viability during eye development and for survival of dividing cells and epithelial cells during early wing disk development. In Drosophila erecta (Fruit fly), this protein is KRR1 small subunit processome component homolog.